The primary structure comprises 364 residues: Probable mannose-1-phosphate guanylyltransferase 2 (364 aa).

Residues Leu6 and Val7 each contribute to the GDP-alpha-D-mannose site. Residues Gly9, Gly11, Thr12, Arg13, and Lys23 each coordinate diphosphate. Residues Gly88, Asn112, Asp114, Gly149, and Asn176 each coordinate GDP-alpha-D-mannose.

The protein belongs to the transferase hexapeptide repeat family.

It carries out the reaction alpha-D-mannose 1-phosphate + GTP + H(+) = GDP-alpha-D-mannose + diphosphate. It functions in the pathway nucleotide-sugar biosynthesis; GDP-alpha-D-mannose biosynthesis; GDP-alpha-D-mannose from alpha-D-mannose 1-phosphate (GTP route): step 1/1. Functionally, catalyzes a reaction of the Smirnoff-Wheeler pathway, the major route to ascorbate biosynthesis in plants. The sequence is that of Probable mannose-1-phosphate guanylyltransferase 2 from Arabidopsis thaliana (Mouse-ear cress).